Consider the following 95-residue polypeptide: Aspartyl/glutamyl-tRNA(Asn/Gln) amidotransferase subunit C (95 aa).

It belongs to the GatC family. Heterotrimer of A, B and C subunits.

The enzyme catalyses L-glutamyl-tRNA(Gln) + L-glutamine + ATP + H2O = L-glutaminyl-tRNA(Gln) + L-glutamate + ADP + phosphate + H(+). It carries out the reaction L-aspartyl-tRNA(Asn) + L-glutamine + ATP + H2O = L-asparaginyl-tRNA(Asn) + L-glutamate + ADP + phosphate + 2 H(+). In terms of biological role, allows the formation of correctly charged Asn-tRNA(Asn) or Gln-tRNA(Gln) through the transamidation of misacylated Asp-tRNA(Asn) or Glu-tRNA(Gln) in organisms which lack either or both of asparaginyl-tRNA or glutaminyl-tRNA synthetases. The reaction takes place in the presence of glutamine and ATP through an activated phospho-Asp-tRNA(Asn) or phospho-Glu-tRNA(Gln). This is Aspartyl/glutamyl-tRNA(Asn/Gln) amidotransferase subunit C from Methylorubrum extorquens (strain CM4 / NCIMB 13688) (Methylobacterium extorquens).